A 286-amino-acid chain; its full sequence is MSLILPLEKPALNLRPLLWLLLPLLVLATLFFWPLSLIVEQALRGANGEIGLETFRQVVDSKRFVGALLNTLQIAFFATAGCLLLGSVMSLILVFIPFPGSELIGRVVDTFIALPTFLITLAFTFIYGSAGLLNGTLMSLFAFELPPVDFLYSMQGVILAEITVFTPLVMRPLMAALRQIDKSQLEAASILGAHPLRVIGQVIFPAALPALMAGGSLCLLLTTNEFGIVLFIGAKGVNTLPMMVYSKAILESDYTVACMIALINIVLSLGLFSLYRLAASRTGVRS.

The next 6 helical transmembrane spans lie at 19–39 (WLLL…SLIV), 76–96 (FFAT…LVFI), 111–131 (FIAL…GSAG), 150–170 (FLYS…PLVM), 202–222 (VIFP…LLLT), and 254–274 (YTVA…LFSL). The ABC transmembrane type-1 domain occupies 68-275 (LLNTLQIAFF…VLSLGLFSLY (208 aa)).

Belongs to the binding-protein-dependent transport system permease family.

It is found in the cell inner membrane. Its function is as follows. Probably part of the PhnSTUV complex (TC 3.A.1.11.5) involved in 2-aminoethylphosphonate import. Probably responsible for the translocation of the substrate across the membrane. This Salmonella typhimurium (strain LT2 / SGSC1412 / ATCC 700720) protein is Putative 2-aminoethylphosphonate transport system permease protein PhnU (phnU).